The following is a 509-amino-acid chain: Proto-oncogene tyrosine-protein kinase LCK (509 aa).

Residue glycine 2 is the site of N-myristoyl glycine attachment. Residues glycine 2 to tyrosine 72 are interactions with CD4 and CD8. Residues cysteine 3 and cysteine 5 are each lipidated (S-palmitoyl cysteine). One can recognise an SH3 domain in the interval leucine 61–serine 121. Residue lysine 99 forms a Glycyl lysine isopeptide (Lys-Gly) (interchain with G-Cter in ubiquitin) linkage. Position 102 is a phosphoserine (serine 102). The region spanning tryptophan 127 to cysteine 224 is the SH2 domain. Residues arginine 154–arginine 242 are interaction with PTPRH. Threonine 159 is subject to Phosphothreonine. Serine 162 bears the Phosphoserine mark. Phosphotyrosine is present on tyrosine 192. Serine 194 carries the phosphoserine modification. A Protein kinase domain is found at leucine 245–phenylalanine 498. ATP contacts are provided by residues leucine 251 to valine 259 and lysine 273. Residue lysine 276 forms a Glycyl lysine isopeptide (Lys-Gly) (interchain with G-Cter in ubiquitin) linkage. The active-site Proton acceptor is aspartate 364. A Phosphotyrosine; by autocatalysis modification is found at tyrosine 394. The residue at position 505 (tyrosine 505) is a Phosphotyrosine.

This sequence belongs to the protein kinase superfamily. Tyr protein kinase family. SRC subfamily. Binds to the cytoplasmic domain of cell surface receptors, such as AXL, CD2, CD4, CD5, CD8, CD44, CD45 and CD122. Also binds to effector molecules, such as PI4K, VAV1, RASA1, FYB1 and to other protein kinases including CDK1, RAF1, ZAP70 and SYK. Binds to phosphatidylinositol 3'-kinase (PI3K) from T-lymphocytes through its SH3 domain and to the tyrosine phosphorylated form of KHDRBS1/p70 through its SH2 domain. Interacts with SQSTM1. Interacts with phosphorylated LIME1. Interacts with CBLB and PTPRH. Interacts with RUNX3. Forms a signaling complex with EPHA1, PTK2B and PI3-KINASE; upon activation by EFNA1 which may regulate T-lymphocytes migration. Associates with ZAP70 and RHOH; these interactions allow LCK-mediated RHOH and CD3 subunit phosphorylations in presence of a functional ZAP70. Interacts with CEACAM1 (via cytoplasmic domain); mediates CEACAM1 phosphorylation resulting in PTPN6 recruitment that dephosphorylates TCR stimulation-induced CD247 and ZAP70. Interacts with FYB2. Interacts with CD160. Interacts with CD48. In terms of processing, autophosphorylated on Tyr-394, increasing enzymatic activity, this site is dephosphorylated by PTN22. Phosphorylated on Tyr-505 by CSK, decreasing activity. Dephosphorylated by PTPRC/CD45. Dephosphorylation at Tyr-394 by PTPN2 negatively regulates T-cells differentiation. Dephosphorylation at Tyr-394 by DUSP22 negatively regulates T-cell receptor signaling. Post-translationally, myristoylation is required prior to palmitoylation. Palmitoylation regulates association with the plasma membrane and could be mediated by ZDHHC2. In terms of processing, 'Lys-63'-linked ubiquitinated at Lys-99 and Lys-276 by UBR2; this modification is required for autophosphorylation at Tyr-394.

The protein resides in the cell membrane. Its subcellular location is the cytoplasm. It localises to the cytosol. It catalyses the reaction L-tyrosyl-[protein] + ATP = O-phospho-L-tyrosyl-[protein] + ADP + H(+). With respect to regulation, the relative activities of the inhibitory tyrosine-protein kinase CSK and the activating tyrosine-protein phosphatase PTPRC/CD45 determine the level of LCK activity. These interactions allow rapid and efficient activation of LCK in response to TCR stimulation. Non-receptor tyrosine-protein kinase that plays an essential role in the selection and maturation of developing T-cells in the thymus and in the function of mature T-cells. Plays a key role in T-cell antigen receptor (TCR)-linked signal transduction pathways. Constitutively associated with the cytoplasmic portions of the CD4 and CD8 surface receptors. Association of the TCR with a peptide antigen-bound MHC complex facilitates the interaction of CD4 and CD8 with MHC class II and class I molecules, respectively, thereby recruiting the associated LCK protein to the vicinity of the TCR/CD3 complex. LCK then phosphorylates tyrosine residues within the immunoreceptor tyrosine-based activation motifs (ITAM) of the cytoplasmic tails of the TCR-gamma chains and CD3 subunits, initiating the TCR/CD3 signaling pathway. Once stimulated, the TCR recruits the tyrosine kinase ZAP70, that becomes phosphorylated and activated by LCK. Following this, a large number of signaling molecules are recruited, ultimately leading to lymphokine production. LCK also contributes to signaling by other receptor molecules. Associates directly with the cytoplasmic tail of CD2, which leads to hyperphosphorylation and activation of LCK. Also plays a role in the IL2 receptor-linked signaling pathway that controls the T-cell proliferative response. Binding of IL2 to its receptor results in increased activity of LCK. Is expressed at all stages of thymocyte development and is required for the regulation of maturation events that are governed by both pre-TCR and mature alpha beta TCR. Phosphorylates other substrates including RUNX3, PTK2B/PYK2, the microtubule-associated protein MAPT, RHOH or TYROBP. Interacts with UNC119; this interaction plays a crucial role in activation of LCK. The polypeptide is Proto-oncogene tyrosine-protein kinase LCK (Lck) (Rattus norvegicus (Rat)).